The following is a 35-amino-acid chain: Purotoxin-1 (35 aa).

Disulfide bonds link C3/C16, C10/C21, C15/C32, and C23/C30.

The protein belongs to the neurotoxin 33 family. As to expression, expressed by the venom gland.

The protein localises to the secreted. Its function is as follows. Inhibits P2RX3 receptors. Has an analgesic effect in rat. Enhances the high-affinity desensitization of P2RX3 purinoceptors. At 50 nM, decreases the IC(50) for ambient ATP from 46.5 nM to 12.7 nM in mouse P2RX3. This chain is Purotoxin-1, found in Alopecosa marikovskyi (Wolf spider).